Consider the following 390-residue polypeptide: MGSSLCVAVRKKEKQKQKKTVVFLPEIPEEMLIDILIRLPAKSLMRFKCVSKLWLSLITSRYFTNRFFKPSSPSCLFAYLVDRENQSKYLLLQSSSSSRHDHSDTSVSVIDQHSTIPIMGGYLVNAARGLLCYRTGRRVKVCNPSTRQIVELPIMRSKTNVWNWFGHDPFHDEYKVLSLFWEVTKEQTVVRSEHQVLVLGVGASWRNTKSHHTPHRPFHPYSRGMTIDGVLYYSARTDANRCVLMSFDLSSEEFNLIELPFENWSRTIHMNYQGKVATCQYMRLASDGFVDVCVLEDADKSQWSNKKTFVLPISQMNFVHGDRLVVGASRDSGKVLMRKANLLRNQHARFFLYDMERNEIARRIEIRPSLLGSFNKTNQFLKVCYTFQTK.

One can recognise an F-box domain in the interval valine 21 to serine 71.

The chain is Putative F-box protein At3g52320 from Arabidopsis thaliana (Mouse-ear cress).